A 1943-amino-acid chain; its full sequence is Protocadherin-15 (1943 aa).

Residues 1-26 form the signal peptide; it reads MFLQFAVWKCLPHGILIASLLVVSWG. Over 27–1381 the chain is Extracellular; the sequence is QYDDDWQYED…GESLGYTEGA (1355 aa). Cysteine 37 and cysteine 125 are joined by a disulfide. 11 consecutive Cadherin domains span residues 45-152, 153-270, 283-400, 401-514, 515-621, 622-722, 724-824, 825-931, 932-1040, 1042-1149, and 1150-1264; these read PATI…SPTF, KHES…GPMF, RPLT…SPYF, TMPS…TPTF, PEIS…PPRF, PQLM…APVF, PYLP…SPVF, TNST…PPVF, SKRI…IPRF, QEEY…PPVF, and QKKF…PPTL. Asparagine 57, asparagine 102, and asparagine 206 each carry an N-linked (GlcNAc...) asparagine glycan. N-linked (GlcNAc...) asparagine glycans are attached at residues asparagine 424, asparagine 564, asparagine 667, asparagine 729, asparagine 773, asparagine 826, and asparagine 856. Residues asparagine 1069, asparagine 1089, and asparagine 1180 are each glycosylated (N-linked (GlcNAc...) asparagine). The chain crosses the membrane as a helical span at residues 1382-1402; the sequence is LLALAFIIILCCIPAILVVLV. The Cytoplasmic segment spans residues 1403–1943; the sequence is SYRQFKVRQA…VQPHSQSTSL (541 aa). Disordered stretches follow at residues 1425–1453, 1475–1533, and 1714–1865; these read PAAK…AHLY, GNNS…STHN, and ILNS…EPHR. A compositionally biased stretch (pro residues) spans 1431-1449; it reads APVPAAPAPPPPPPPPPPG. Composition is skewed to basic and acidic residues over residues 1480–1489 and 1498–1509; these read PEDRSSHRDG and ESHEPAHVEGPL. Pro residues-rich tracts occupy residues 1742–1760 and 1769–1779; these read PHPP…PRPP and PLSPPNPPPPQ. Low complexity predominate over residues 1784-1795; sequence SLPISTPPTSSL. The segment covering 1796–1821 has biased composition (pro residues); the sequence is PLPPPLSLPPPPRPPAPRLFPQPPST. Over residues 1822–1834 the composition is skewed to low complexity; that stretch reads SIPSTDSISAPAA. Over residues 1846–1858 the composition is skewed to polar residues; the sequence is TTSTTQPPASNPQ.

Antiparallel heterodimer with CDH23. Found in a complex with TMIE and LHFPL5. Interacts with LHFPL5/TMHS; this interaction is required for efficient localization to hair bundles. Interacts with MYO7A. Interacts with USH1G; this interaction may recruit USH1G to the plasma membrane. Interacts with TOMT. Isoforms CD1 and CD3 interact with TMC1 (via N-terminus) and TMC2 (via N-terminus). Interacts with PIEZO1. As to expression, expressed in brain and sensory epithelium of the developing inner ear. Expressed in the retina, in the photoreceptor inner segments, the outer plexiform layer, the inner nuclei layer and the ganglion cell layer and, more diffusely in the inner plexiform layer (at protein level). Not detected in the retinal pigment epithelium (at protein level). Expressed in the spleen, dorsal root ganglion, dorsal aspect of neural tube, floor plate and ependymal cells adjacent to the neural canal.

The protein localises to the cell membrane. It is found in the secreted. Its function is as follows. Calcium-dependent cell-adhesion protein. Required for inner ear neuroepithelial cell elaboration and cochlear function. Probably involved in the maintenance of normal retinal function. The polypeptide is Protocadherin-15 (Pcdh15) (Mus musculus (Mouse)).